The primary structure comprises 347 residues: Oocyte-specific homeobox protein 6 (347 aa).

2 disordered regions span residues Met-1 to Phe-20 and Pro-54 to Gln-86. Residues Gln-72–Met-85 are compositionally biased toward polar residues. The homeobox DNA-binding region spans His-145–Ser-204.

This sequence belongs to the paired homeobox family. Obox subfamily. Specifically expressed in early embryos.

It localises to the nucleus. In terms of biological role, transcription factor required for zygotic genome activation (ZGA), a critical event in early embryonic development during which the developmental control passes from maternally provided mRNAs to the expression of the zygotic genome after fertilization. In Mus musculus (Mouse), this protein is Oocyte-specific homeobox protein 6.